Consider the following 252-residue polypeptide: 2-succinyl-6-hydroxy-2,4-cyclohexadiene-1-carboxylate synthase (252 aa).

Belongs to the AB hydrolase superfamily. MenH family. Monomer.

It carries out the reaction 5-enolpyruvoyl-6-hydroxy-2-succinyl-cyclohex-3-ene-1-carboxylate = (1R,6R)-6-hydroxy-2-succinyl-cyclohexa-2,4-diene-1-carboxylate + pyruvate. It participates in quinol/quinone metabolism; 1,4-dihydroxy-2-naphthoate biosynthesis; 1,4-dihydroxy-2-naphthoate from chorismate: step 3/7. Its pathway is quinol/quinone metabolism; menaquinone biosynthesis. Its function is as follows. Catalyzes a proton abstraction reaction that results in 2,5-elimination of pyruvate from 2-succinyl-5-enolpyruvyl-6-hydroxy-3-cyclohexene-1-carboxylate (SEPHCHC) and the formation of 2-succinyl-6-hydroxy-2,4-cyclohexadiene-1-carboxylate (SHCHC). This is 2-succinyl-6-hydroxy-2,4-cyclohexadiene-1-carboxylate synthase from Salmonella arizonae (strain ATCC BAA-731 / CDC346-86 / RSK2980).